The primary structure comprises 335 residues: Urokinase plasminogen activator surface receptor (335 aa).

The signal sequence occupies residues 1-22; it reads MGHPPLLPLLLLLHTCVPASWG. 3 consecutive UPAR/Ly6 domains span residues 23 to 114, 115 to 213, and 214 to 305; these read LRCM…RSRY, LECI…PQNG, and RQCY…YRSG. Intrachain disulfides connect Cys25–Cys46, Cys28–Cys34, and Cys39–Cys67. Asn74 carries N-linked (GlcNAc...) asparagine glycosylation. 11 disulfides stabilise this stretch: Cys93/Cys98, Cys117/Cys144, Cys120/Cys127, Cys137/Cys169, Cys175/Cys192, Cys193/Cys198, Cys216/Cys244, Cys219/Cys227, Cys237/Cys263, Cys269/Cys287, and Cys288/Cys293. N-linked (GlcNAc...) asparagine glycosylation is found at Asn184, Asn194, Asn222, and Asn255. Residue Gly305 is the site of GPI-anchor amidated glycine attachment. Residues 306 to 335 constitute a propeptide, removed in mature form; sequence AAPQPGPAHLSLTITLLMTARLWGGTLLWT.

In terms of assembly, monomer. Interacts with MRC2. Interacts (via the UPAR/Ly6 domains) with SRPX2. Interacts with FAP (seprase); the interaction occurs at the cell surface of invadopodia membrane. Interacts with SORL1 (via N-terminal ectodomain); this interaction decreases PLAUR internalization. The ternary complex composed of PLAUR-PLAU-SERPINE1 also interacts with SORL1. Interacts with CD82; this interaction prevents PLAUR from binding to its high affinity ligand PLAU. Expressed in neurons of the rolandic area of the brain (at protein level). Expressed in the brain.

The protein localises to the cell membrane. It localises to the cell projection. Its subcellular location is the invadopodium membrane. The protein resides in the secreted. In terms of biological role, acts as a receptor for urokinase plasminogen activator. Plays a role in localizing and promoting plasmin formation. Mediates the proteolysis-independent signal transduction activation effects of U-PA. It is subject to negative-feedback regulation by U-PA which cleaves it into an inactive form. The polypeptide is Urokinase plasminogen activator surface receptor (PLAUR) (Homo sapiens (Human)).